The primary structure comprises 454 residues: MARIHLIIILLVISSTSSSSSSLREQEEDMIKALPGQPQVGFSQFSGYVTVNESHGRSLFYWLTESPSSSHTKPLLLWLNGGPGCSSIGYGASEEIGPFRINKTGSNLYLNKFTWNTEANILFLESPAGVGFSYTNTSSDLKDSGDERTAQENLIFLIKWMSRFPQYQYRDFYIVGESYAGHYVPQLAKKIHLYNKAFNNTPIINLKGFMVGNGDMDKHYDRLGAAMYAWSHAMISDKTYKSILKHCSFTADKTSDKCNWALYFAYREFGKVNGYSIYSPSCVHQTNQTKFLHGRLLVEEYEYDPCTESYAEIYYNRPDVQRAMHANLTSIPYKWTLCNMVVNNNWKDSEFSMLPIYKELTAAGLRIWVFSGDTDAVVPVTGTRLALSKLNLPVKTPWYPWYSEKQVGGWTEVYEGLTFATIRGAGHEVPVLQPERALTLLRSFLAGKELPRSY.

The N-terminal stretch at 1–22 (MARIHLIIILLVISSTSSSSSS) is a signal peptide. Residues asparagine 52, asparagine 102, and asparagine 136 are each glycosylated (N-linked (GlcNAc...) asparagine). 3 disulfide bridges follow: cysteine 85/cysteine 338, cysteine 247/cysteine 258, and cysteine 282/cysteine 306. Serine 178 is a catalytic residue. Asparagine 287 and asparagine 327 each carry an N-linked (GlcNAc...) asparagine glycan. Catalysis depends on residues aspartate 375 and histidine 427.

The protein belongs to the peptidase S10 family. As to expression, expression not detected.

The protein resides in the secreted. Its function is as follows. Probable carboxypeptidase. In Arabidopsis thaliana (Mouse-ear cress), this protein is Putative serine carboxypeptidase-like 23 (SCPL23).